Reading from the N-terminus, the 113-residue chain is uncharacterized protein (113 aa).

The protein resides in the mitochondrion. This is an uncharacterized protein from Arabidopsis thaliana (Mouse-ear cress).